The following is a 668-amino-acid chain: uncharacterized protein (668 aa).

Helical transmembrane passes span 182–202, 208–228, 286–306, 321–341, 379–399, 430–450, 499–519, 557–577, and 587–607; these read FAFADFFKTGVFVLSFWGILG, PYSYIFAIGVALWGAFFIQFW, VPLFLISGCILLFLIAIAFIV, IVSLLPAVVFQVLTLPFTFIY, ALFLISYIYGPFAEYFVPHYI, IYFLTNAQVINYITILAVPQL, FVLMFGFLVMFSPIYPLAPIF, LSLLSWLGCITMPSICYFYSS, and VIAAVIGLLSEHLWFLLRMFI.

It localises to the membrane. This is an uncharacterized protein from Schizosaccharomyces pombe (strain 972 / ATCC 24843) (Fission yeast).